Consider the following 471-residue polypeptide: Protoporphyrinogen oxidase (471 aa).

FAD is bound by residues 16-21, 39-40, A47, 61-64, V251, W408, and 446-448; these read GGGISG, ES, GPNS, and VGL.

The protein belongs to the protoporphyrinogen/coproporphyrinogen oxidase family. Protoporphyrinogen oxidase subfamily. Monomer. Homodimer. Requires FAD as cofactor.

The protein localises to the cytoplasm. It localises to the cell membrane. It carries out the reaction protoporphyrinogen IX + 3 O2 = protoporphyrin IX + 3 H2O2. It participates in porphyrin-containing compound metabolism; protoporphyrin-IX biosynthesis; protoporphyrin-IX from protoporphyrinogen-IX: step 1/1. Strongly inhibited by acifluorfen. In terms of biological role, catalyzes the 6-electron oxidation of protoporphyrinogen-IX to form protoporphyrin-IX. Does not oxidize coproporphyrinogen III. Involved in the classical protoporphyrin-dependent (PPD) heme b biosynthesis. In Myxococcus xanthus, this protein is Protoporphyrinogen oxidase.